We begin with the raw amino-acid sequence, 119 residues long: Chorion class CA protein ERA.2 (119 aa).

An N-terminal signal peptide occupies residues 1–21 (MSKLVVFLFCIQVCFIQNVYS). Positions 22–55 (QCLGRVGPGGPPLGPYGGPLGGPGYGPVGYGGCG) are left arm. The tract at residues 56 to 103 (GYGGSGIGNVAVAGELPVAGSTGVTGQVPVIGAVEFAGPACAVGSVSI) is central domain. Residues 104–119 (SGACGPTCGCGGSPFY) are right arm.

This sequence belongs to the chorion protein family.

Functionally, this protein is one of many from the eggshell of the silk moth. The protein is Chorion class CA protein ERA.2 (ERA.2) of Bombyx mori (Silk moth).